The primary structure comprises 97 residues: Antitoxin YafN (97 aa).

Belongs to the phD/YefM antitoxin family. Probably forms a complex with the mRNA interferase YafO which inhibits the mRNA interferase activity.

Functionally, antitoxin component of a type II toxin-antitoxin (TA) system. Functions as an mRNA interferase antitoxin; overexpression prevents YafO-mediated cessation of cell growth and inhibition of cell proliferation. The sequence is that of Antitoxin YafN (yafN) from Escherichia coli (strain K12).